Consider the following 72-residue polypeptide: Translational regulator CsrA (72 aa).

Belongs to the CsrA/RsmA family. As to quaternary structure, homodimer; the beta-strands of each monomer intercalate to form a hydrophobic core, while the alpha-helices form wings that extend away from the core.

The protein resides in the cytoplasm. Its function is as follows. A translational regulator that binds mRNA to regulate translation initiation and/or mRNA stability. Usually binds in the 5'-UTR at or near the Shine-Dalgarno sequence preventing ribosome-binding, thus repressing translation. Its main target seems to be the major flagellin gene, while its function is anatagonized by FliW. The protein is Translational regulator CsrA of Agathobacter rectalis (strain ATCC 33656 / DSM 3377 / JCM 17463 / KCTC 5835 / VPI 0990) (Eubacterium rectale).